Here is a 466-residue protein sequence, read N- to C-terminus: Glutamate--tRNA ligase 2 (466 aa).

The 'HIGH' region signature appears at Pro-9–Gly-19. The 'KMSKS' region motif lies at Pro-234–Arg-238. Lys-237 lines the ATP pocket.

Belongs to the class-I aminoacyl-tRNA synthetase family. Glutamate--tRNA ligase type 1 subfamily. In terms of assembly, monomer.

The protein localises to the cytoplasm. The catalysed reaction is tRNA(Glu) + L-glutamate + ATP = L-glutamyl-tRNA(Glu) + AMP + diphosphate. In terms of biological role, catalyzes the attachment of glutamate to tRNA(Glu) in a two-step reaction: glutamate is first activated by ATP to form Glu-AMP and then transferred to the acceptor end of tRNA(Glu). This is Glutamate--tRNA ligase 2 from Pseudothermotoga lettingae (strain ATCC BAA-301 / DSM 14385 / NBRC 107922 / TMO) (Thermotoga lettingae).